We begin with the raw amino-acid sequence, 527 residues long: Bifunctional purine biosynthesis protein PurH (527 aa).

The MGS-like domain maps to 1-149 (MASDFLPVRR…KNFARVAVAA (149 aa)).

The protein belongs to the PurH family.

It catalyses the reaction (6R)-10-formyltetrahydrofolate + 5-amino-1-(5-phospho-beta-D-ribosyl)imidazole-4-carboxamide = 5-formamido-1-(5-phospho-D-ribosyl)imidazole-4-carboxamide + (6S)-5,6,7,8-tetrahydrofolate. The enzyme catalyses IMP + H2O = 5-formamido-1-(5-phospho-D-ribosyl)imidazole-4-carboxamide. It participates in purine metabolism; IMP biosynthesis via de novo pathway; 5-formamido-1-(5-phospho-D-ribosyl)imidazole-4-carboxamide from 5-amino-1-(5-phospho-D-ribosyl)imidazole-4-carboxamide (10-formyl THF route): step 1/1. It functions in the pathway purine metabolism; IMP biosynthesis via de novo pathway; IMP from 5-formamido-1-(5-phospho-D-ribosyl)imidazole-4-carboxamide: step 1/1. The protein is Bifunctional purine biosynthesis protein PurH of Xanthomonas axonopodis pv. citri (strain 306).